Here is a 263-residue protein sequence, read N- to C-terminus: Putative TATA-binding protein pB263R (263 aa).

It belongs to the asfivirus B263R family.

In terms of biological role, putative TATA-binding protein. The polypeptide is Putative TATA-binding protein pB263R (African swine fever virus (isolate Tick/Malawi/Lil 20-1/1983) (ASFV)).